A 255-amino-acid chain; its full sequence is High-affinity branched-chain amino acid transport ATP-binding protein LivG (255 aa).

Residues 6-254 (LAVNGLMMRF…PDVIRAYLGE (249 aa)) form the ABC transporter domain. Position 38–45 (38–45 (GPNGAGKT)) interacts with ATP.

Belongs to the ABC transporter superfamily.

Component of the high-affinity branched-chain amino acid transport system. The chain is High-affinity branched-chain amino acid transport ATP-binding protein LivG (livG) from Salmonella typhi.